Consider the following 506-residue polypeptide: Conglutin alpha 1 (506 aa).

The signal sequence occupies residues 1 to 19 (MANKLLALSLFLLFSGCFA). Intrachain disulfides connect C31/C64 and C107/C328. The Cupin type-1 1 domain occupies 36–235 (LNALEPDNSV…AFSVDREIVR (200 aa)). 3 disordered regions span residues 111 to 131 (YEEPQEQEQGQGPRPQDRHQK), 195 to 216 (QQKEGGQGQQQEGGNEGGNVLS), and 251 to 322 (VKEG…DRNG). The span at 195-207 (QQKEGGQGQQQEG) shows a compositional bias: low complexity. Residues 270 to 280 (EEEEEEEEEEE) are compositionally biased toward acidic residues. A compositionally biased stretch (basic residues) spans 306 to 315 (QVRRVRRPHH). Residues 334-483 (HNIGQSTSPD…AFNLDRDQAR (150 aa)) form the Cupin type-1 2 domain. 2 N-linked (GlcNAc...) asparagine glycosylation sites follow: N397 and N439.

This sequence belongs to the 11S seed storage protein (globulins) family. Hexamer; each subunit is composed of an acidic and a basic chain derived from a single precursor and linked by a disulfide bond. Component of globulins complexes which accumulate in seeds. As to expression, expressed in developing cotyledons and in the embryonic axis of germinating seeds.

Sulfur-rich seed storage protein. This protein found in the seeds of many leguminous and non-leguminous plants is the source of sulfur-containing amino acids in seed meals. The protein is Conglutin alpha 1 of Lupinus angustifolius (Narrow-leaved blue lupine).